The primary structure comprises 160 residues: Nucleotide-binding protein Tgr7_1196 (160 aa).

This sequence belongs to the YajQ family.

In terms of biological role, nucleotide-binding protein. This chain is Nucleotide-binding protein Tgr7_1196, found in Thioalkalivibrio sulfidiphilus (strain HL-EbGR7).